The sequence spans 243 residues: MTKIFAHRGASGQFPENTMLAFEKGIEAGADGIELDVQLTKDGRIVVIHDERLNRTTSLKGFVKDTAYDEVKTANAAAGHDQAYSDIKVPLLEDVLSWAVKKDFLINIELKNSVIRYEGMEEKVLEAVKRFNVEDRVILSTFNHDSLALCARLAPHIERAVLTSDVLYQADRYIASIPASGYHPKINSPGVTDEVLKKMRNGLIKVRPYTVNRPEDMKRLIEAGADGMFTDFPEKASALLKNE.

In terms of domain architecture, GP-PDE spans 2 to 240; that stretch reads TKIFAHRGAS…DFPEKASALL (239 aa).

This is an uncharacterized protein from Bacillus subtilis (strain 168).